The sequence spans 224 residues: Ribose-5-phosphate isomerase A (224 aa).

Substrate is bound by residues 32–35 (TGST), 85–88 (DGAD), and 98–101 (KGGG). Catalysis depends on Glu107, which acts as the Proton acceptor. Lys125 provides a ligand contact to substrate.

The protein belongs to the ribose 5-phosphate isomerase family. As to quaternary structure, homodimer.

It carries out the reaction aldehydo-D-ribose 5-phosphate = D-ribulose 5-phosphate. It functions in the pathway carbohydrate degradation; pentose phosphate pathway; D-ribose 5-phosphate from D-ribulose 5-phosphate (non-oxidative stage): step 1/1. Catalyzes the reversible conversion of ribose-5-phosphate to ribulose 5-phosphate. The polypeptide is Ribose-5-phosphate isomerase A (Pseudomonas putida (strain ATCC 700007 / DSM 6899 / JCM 31910 / BCRC 17059 / LMG 24140 / F1)).